The primary structure comprises 43 residues: CLAVATA3/ESR (CLE)-related protein 16D10 (43 aa).

Residues 1-30 form the signal peptide; sequence MFTNSIKNLIIYLMPLMVTLMLLSVSFVDA. Residues 31–43 carry the CLE motif; the sequence is GKKPSGPNPGGNN.

Belongs to the CLV3/ESR signal peptide family. In terms of tissue distribution, highly expressed exclusively within the subventral esophageal gland cell during syncytium formation in host plants.

The protein localises to the secreted. The protein resides in the host cytoplasm. Its subcellular location is the host extracellular space. In terms of biological role, plays a role in the differentiation or division of feeding cells (syncytia) induced in plant roots during infection. Promotes host root growth. This is CLAVATA3/ESR (CLE)-related protein 16D10 (16D10) from Meloidogyne arenaria (Peanut root-knot nematode).